The following is a 416-amino-acid chain: UPF0761 membrane protein Rfer_2991 (416 aa).

A run of 6 helical transmembrane segments spans residues 60-80 (MALVPLVTVALAIFTAFPMFA), 117-137 (LGGAGIALLLVTAVALILTID), 156-176 (VLVYWAALTLGPLVLGVSLSI), 187-207 (VVGVMPGGVQFLLDVLQFFMV), 222-242 (WVKWSHAWAGGMFVSAGLELA), and 268-288 (ILLIWIYVAWIIVLLGAVIAA).

It belongs to the UPF0761 family.

The protein localises to the cell inner membrane. The protein is UPF0761 membrane protein Rfer_2991 of Albidiferax ferrireducens (strain ATCC BAA-621 / DSM 15236 / T118) (Rhodoferax ferrireducens).